The chain runs to 251 residues: Indole-3-glycerol phosphate synthase (251 aa).

The span at 1-12 shows a compositional bias: polar residues; that stretch reads MDDSSSLASPVQ. The segment at 1–27 is disordered; it reads MDDSSSLASPVQSILAAARRRDPPTRR.

The protein belongs to the TrpC family.

It catalyses the reaction 1-(2-carboxyphenylamino)-1-deoxy-D-ribulose 5-phosphate + H(+) = (1S,2R)-1-C-(indol-3-yl)glycerol 3-phosphate + CO2 + H2O. The protein operates within amino-acid biosynthesis; L-tryptophan biosynthesis; L-tryptophan from chorismate: step 4/5. This chain is Indole-3-glycerol phosphate synthase, found in Halobacterium salinarum (strain ATCC 700922 / JCM 11081 / NRC-1) (Halobacterium halobium).